The primary structure comprises 441 residues: Tubulin beta-1 chain (441 aa).

The GTP site is built by glutamine 11, glutamate 69, serine 138, glycine 142, threonine 143, glycine 144, asparagine 204, and asparagine 226. Glutamate 69 serves as a coordination point for Mg(2+).

Belongs to the tubulin family. As to quaternary structure, dimer of alpha and beta chains. A typical microtubule is a hollow water-filled tube with an outer diameter of 25 nm and an inner diameter of 15 nM. Alpha-beta heterodimers associate head-to-tail to form protofilaments running lengthwise along the microtubule wall with the beta-tubulin subunit facing the microtubule plus end conferring a structural polarity. Microtubules usually have 13 protofilaments but different protofilament numbers can be found in some organisms and specialized cells. Mg(2+) serves as cofactor. Expressed primarily in touch receptor neurons.

The protein localises to the cytoplasm. It is found in the cytoskeleton. Its function is as follows. Tubulin is the major constituent of microtubules, a cylinder consisting of laterally associated linear protofilaments composed of alpha- and beta-tubulin heterodimers. Microtubules grow by the addition of GTP-tubulin dimers to the microtubule end, where a stabilizing cap forms. Below the cap, tubulin dimers are in GDP-bound state, owing to GTPase activity of alpha-tubulin. Plays a role in mechanosensory transduction (touch sensitivity). Functionally, mec-7 beta-tubulin is required for the production of 15-protofilament microtubules. This chain is Tubulin beta-1 chain (mec-7), found in Caenorhabditis briggsae.